The sequence spans 258 residues: Exosome complex component Rrp41 (258 aa).

The protein belongs to the RNase PH family. Rrp41 subfamily. Component of the archaeal exosome complex. Forms a hexameric ring-like arrangement composed of 3 Rrp41-Rrp42 heterodimers. The hexameric ring associates with a trimer of Rrp4 and/or Csl4 subunits.

The protein localises to the cytoplasm. Catalytic component of the exosome, which is a complex involved in RNA degradation. Has 3'-&gt;5' exoribonuclease activity. Can also synthesize heteromeric RNA-tails. This Archaeoglobus fulgidus (strain ATCC 49558 / DSM 4304 / JCM 9628 / NBRC 100126 / VC-16) protein is Exosome complex component Rrp41.